We begin with the raw amino-acid sequence, 1766 residues long: MSGGAALPVSQMELHKVNEVQFEIFKERQIKSYAVCLVEHAKSYANAADQSGEASMICVWVPLTSNSACETCHRKHPECPGHFGYIELAEPVFNIGVFDLVLLVLKCVCKTCGALLLNTREQDVHKKLQHVTGLNRLRQVAKMAEAKCRVSTSTEDDMGIDGFDSAPFNGGSGMGPGATRGCGASQPRVSRFYGIYPTLVIKAVHEEQDAEWHADKVRQVLDRVSDDDARLMGFDPQRCHPRDLVLTVLPVPPPQVRPAISFGGLRSDDELTHQIMSIVKRNNQLRRDKESDVQAAIDRSRALLQEHVATYFNNASTYYKPTKVNDTKKLKSLTERLKGKYGRLRGNLMGKRVDFSARTVITGDPNIDVDEVGVPFSVAMTLTFPERVNTVNKKRLTEFARRTVYPSANYIHHPNGTITKLALLRDRSKVTLNIGDVVERHVINGDVVLFNRQPTLHRMSMMGHRVRVLNYSTFRLNLSCTTPYNADFDGDEMNLHVPQSLLTKAELIEMMMVPKNFVSPNKSAPCMGIVQDSLLGSYRLTDKDTFLDKYFVQSVALWLDLWQLPIPAILKPRPLWTGKQVFSLILPEVNHPATPQDRPPFPHNDSVVMIRRGQLLCGPITKSIVGAAPGSLIHVIFNEHGSDEVARFINGVQRVTTFFLLNFGFSVGVQDTVADSDTLRQMNDVLVKTRRNVEKIGAAANNRTLNRKAGMTLLQSFEADVNSALNKCREEAAKKALSNVRRTNSFKVMIEAGSKGTDLNICQIAVFVGQQNVAGSRIPFGFRRRTLPHFMLDDYGETSRGMANRGYVEGLKPHEFFFHTMAGREGLIDTAVKTSDTGYLQRKLIKALEDVHAAYDGTVRNANDELIQFMYGEDGLDGARIEGGQLFPLPFRDDKEMEDTYKYEYDVDGTFSGKVGGNYMDPHVRKMLRADPQNVRKLQEEYEQLTADREWSRKMLDLEDRDKLKLNLPVNPGRLIQNARSTMGKRSQVSNLSPITIIDHVRKLQEDLMKLFPSYHRGGDGYIRNTLSRERIESALTLFNVHLRQLLASKRVLKEYKLNDRAFEYLLKEIRTKYHQSLTTPGENIGAIAAQSCGEPATQMTLNTFHNAGISSKNVTLGVPRLLELLNVSRNQKHASMTVSLFPPYDEKRNAQKAQHLIEYCTLESITRRIQFIYDPDPRHTVVEADRDILELEWNVMDESDAELRIQEVVAGSPWVVRLELDVDMVTDKALDMKDVKQAILRVDESYIIETGMANNVRQRTIRMRSRYNEGADSIPKLKREIPALLARVHLRGIPGVRRALLKDTTEFTVDQATGKMSGNKIWAIDTDGTALRRAFIGVVGEDGKNIINAVKTSSNKVPEVCSLLGIEAARSKMLTELREAYLAYGLNINYRHYTILVDTICQHGYLMAVSRSGINRSDTSGPLMRCSFEETVKVLMAAASFGECDPVRGVSANLVLGNQARVGTGLFDLVLNMAALQQAVPQAEAVAPGKDVNVYHSLGSTLQQNIQSSIAYRPRDHDATPFVNNASLFLRQGFGGGSSSAPVTASAPYNPSTTYHGGRLEASAVHRSQAYSTSPALEYGGREASASQMYSVMSSASAFNPVSTRMSSVAHSYSEYSEASSYHLQHSVAPTSMQASLPRTDNSMTMQGIGSVSVPYTPHAMSSAAPPSQVYASTEVGRSHSEDSRSQSALYVPTLSPTHAGYAIRGDEPSTHRSDSNVMWREAGGGREQDEEDDLSTNYMPTAKTPQQAAPPTAAEFGDEEEEEQ.

Zn(2+) is bound by residues cysteine 69, cysteine 72, cysteine 79, and histidine 82. Positions 487, 489, and 491 each coordinate Mg(2+). Positions 813–825 are bridging helix; that stretch reads PHEFFFHTMAGRE. Residues 1660–1766 are disordered; the sequence is HAMSSAAPPS…EFGDEEEEEQ (107 aa). A compositionally biased stretch (basic and acidic residues) spans 1706-1716; it reads RGDEPSTHRSD. Over residues 1742–1756 the composition is skewed to low complexity; that stretch reads PTAKTPQQAAPPTAA.

It belongs to the RNA polymerase beta' chain family. In terms of assembly, component of the RNA polymerase II (Pol II) complex consisting of 12 subunits.

Its subcellular location is the nucleus. It carries out the reaction RNA(n) + a ribonucleoside 5'-triphosphate = RNA(n+1) + diphosphate. In terms of biological role, DNA-dependent RNA polymerase catalyzes the transcription of DNA into RNA using the four ribonucleoside triphosphates as substrates. Largest and catalytic component of RNA polymerase II which synthesizes mRNA precursors and many functional non-coding RNAs. Forms the polymerase active center together with the second largest subunit. Pol II is the central component of the basal RNA polymerase II transcription machinery. It is composed of mobile elements that move relative to each other. RPB1 is part of the core element with the central large cleft, the clamp element that moves to open and close the cleft and the jaws that are thought to grab the incoming DNA template. At the start of transcription, a single-stranded DNA template strand of the promoter is positioned within the central active site cleft of Pol II. A bridging helix emanates from RPB1 and crosses the cleft near the catalytic site and is thought to promote translocation of Pol II by acting as a ratchet that moves the RNA-DNA hybrid through the active site by switching from straight to bent conformations at each step of nucleotide addition. During transcription elongation, Pol II moves on the template as the transcript elongates. The protein is DNA-directed RNA polymerase II subunit RPB1-A (TRP4.8) of Trypanosoma brucei brucei.